Consider the following 285-residue polypeptide: MEMO1 family protein Igni_0992 (285 aa).

This sequence belongs to the MEMO1 family.

This is MEMO1 family protein Igni_0992 from Ignicoccus hospitalis (strain KIN4/I / DSM 18386 / JCM 14125).